Consider the following 466-residue polypeptide: Asparagine--tRNA ligase (466 aa).

Belongs to the class-II aminoacyl-tRNA synthetase family. As to quaternary structure, homodimer.

The protein resides in the cytoplasm. It catalyses the reaction tRNA(Asn) + L-asparagine + ATP = L-asparaginyl-tRNA(Asn) + AMP + diphosphate + H(+). The sequence is that of Asparagine--tRNA ligase from Salmonella choleraesuis (strain SC-B67).